Reading from the N-terminus, the 351-residue chain is Glycerol-1-phosphate dehydrogenase [NAD(P)+] (351 aa).

Residues 93–97 (GKVLD) and 115–118 (TTAS) contribute to the NAD(+) site. Substrate is bound at residue Asp120. An NAD(+)-binding site is contributed by Ser124. Asp167 lines the substrate pocket. Zn(2+)-binding residues include Asp167 and His247. His251 is a binding site for substrate. Zn(2+) is bound at residue His263.

It belongs to the glycerol-1-phosphate dehydrogenase family. The cofactor is Zn(2+).

Its subcellular location is the cytoplasm. The catalysed reaction is sn-glycerol 1-phosphate + NAD(+) = dihydroxyacetone phosphate + NADH + H(+). The enzyme catalyses sn-glycerol 1-phosphate + NADP(+) = dihydroxyacetone phosphate + NADPH + H(+). It participates in membrane lipid metabolism; glycerophospholipid metabolism. Catalyzes the NAD(P)H-dependent reduction of dihydroxyacetonephosphate (DHAP or glycerone phosphate) to glycerol 1-phosphate (G1P). The G1P thus generated is used as the glycerophosphate backbone of phospholipids in the cellular membranes of Archaea. This is Glycerol-1-phosphate dehydrogenase [NAD(P)+] from Archaeoglobus fulgidus (strain ATCC 49558 / DSM 4304 / JCM 9628 / NBRC 100126 / VC-16).